Reading from the N-terminus, the 611-residue chain is Adenosylhomocysteinase 3 (611 aa).

Low complexity-rich tracts occupy residues 1–14 (MSVQVVSAAAAAKV), 36–57 (AAVGAMAPPAGGGDPEAPAPAA), and 68–81 (GPAAALSPAAGKVP). The disordered stretch occupies residues 1 to 184 (MSVQVVSAAA…KQQKNSKGSS (184 aa)). An N-acetylserine modification is found at Ser2. The interval 2-109 (SVQVVSAAAA…DGGEALVSPD (108 aa)) is LISN domain, inhibits interaction with ITPR1. At Ser107 the chain carries Phosphoserine. A compositionally biased stretch (basic residues) spans 135 to 144 (RPTKIGRRSL). Residues 145-164 (SRSISQSSTDSYSSAASYTD) show a composition bias toward low complexity. Phosphoserine is present on residues Ser149, Ser152, Ser155, and Ser158. Substrate is bound by residues Thr236, Asp310, and Glu335. Residue 336–338 (SVT) participates in NAD(+) binding. The substrate site is built by Lys365 and Asp369. Residues Asn370, 401 to 406 (GEVGKG), Glu422, Asn457, 478 to 479 (MG), and Asn525 contribute to the NAD(+) site.

This sequence belongs to the adenosylhomocysteinase family. Homotetramer. Forms heteromultimers with AHCYL1 (via the C-terminal region). Interacts with ITPR1; with lower affinity than AHCYL1 and maybe via ITPR1. Interacts with SLC4A4. Interacts with ZCCHC4. NAD(+) is required as a cofactor. Phosphorylated during neuronal differentiation at the LISN domain.

The protein resides in the cytoplasm. The protein localises to the microsome. It catalyses the reaction S-adenosyl-L-homocysteine + H2O = L-homocysteine + adenosine. It functions in the pathway amino-acid biosynthesis; L-homocysteine biosynthesis; L-homocysteine from S-adenosyl-L-homocysteine: step 1/1. Functionally, may regulate the electrogenic sodium/bicarbonate cotransporter SLC4A4 activity and Mg(2+)-sensitivity. On the contrary of its homolog AHCYL1, does not regulate ITPR1 sensitivity to inositol 1,4,5-trisphosphate. This is Adenosylhomocysteinase 3 (AHCYL2) from Homo sapiens (Human).